The sequence spans 1313 residues: Angiotensin-converting enzyme (1313 aa).

An N-terminal signal peptide occupies residues 1 to 35; sequence MGAASGQRGRWPLSPPLLMLSLLLLLLLPPSPAPA. Topologically, residues 36–1265 are extracellular; that stretch reads LDPGLQPGNF…LEPQQARVGQ (1230 aa). 6 N-linked (GlcNAc...) asparagine glycosylation sites follow: N44, N60, N80, N117, N152, and N166. 2 consecutive Peptidase M2 domains span residues 46–630 and 649–1228; these read SADE…LGWP and ETDE…LGWP. Residues C163 and C171 are joined by a disulfide bond. Residue Y237 participates in chloride binding. An N-linked (GlcNAc...) asparagine glycan is attached at N324. C365 and C383 form a disulfide bridge. H396 serves as a coordination point for Zn(2+). The active-site Proton acceptor 1 is E397. Zn(2+) contacts are provided by H400 and E424. N515 carries N-linked (GlcNAc...) asparagine glycosylation. The active-site Proton donor 1 is H526. A chloride-binding site is contributed by R535. A disulfide bridge links C551 with C563. Residues N683, N701, N720, and N766 are each glycosylated (N-linked (GlcNAc...) asparagine). C763 and C769 are disulfide-bonded. Chloride-binding residues include R797 and Y835. Residue N948 is glycosylated (N-linked (GlcNAc...) asparagine). A disulfide bridge connects residues C963 and C981. Position 994 (H994) interacts with Zn(2+). The Proton acceptor 2 role is filled by E995. 2 residues coordinate Zn(2+): H998 and E1022. The chloride site is built by W1096 and R1100. The Proton donor 2 role is filled by H1124. A chloride-binding site is contributed by R1133. A disulfide bridge links C1149 with C1161. An N-linked (GlcNAc...) asparagine glycan is attached at N1197. The interval 1221–1262 is juxtamembrane stalk; it reads HGETLGWPEYTWTPNTARAEGSLPESSRVNFLGMYLEPQQAR. The helical transmembrane segment at 1266–1282 threads the bilayer; it reads WVLLFLGVALLVATVGL. The Cytoplasmic portion of the chain corresponds to 1283–1313; that stretch reads AHRLYNIHNHHSLRRPHRGPQFGSEVELRHS. S1306 carries the post-translational modification Phosphoserine.

This sequence belongs to the peptidase M2 family. In terms of assembly, monomer and homodimer; homodimerizes following binding to an inhibitor. Interacts with calmodulin (CALM1, CALM2 or CALM3); interaction takes place in the cytoplasmic region and regulates phosphorylation and proteolytic cleavage. Requires Zn(2+) as cofactor. It depends on chloride as a cofactor. Post-translationally, produced following proteolytic cleavage by secretase enzymes that cleave the transmembrane form in the juxtamembrane stalk region upstream of the transmembrane region. Cleavage can take place at different sites of the juxtamembrane stalk region. Phosphorylated by CK2 on Ser-1306; which allows membrane retention. Phosphorylated on tyrosine residues on its extracellular part, promoting cleavage by secretase enzymes and formation of the soluble form (Angiotensin-converting enzyme, soluble form). As to expression, expressed in brain, kidney, lung, skeletal muscle and heart. Testis-specific isoform is expressed in spermatocytes, adult testis.

Its subcellular location is the cell membrane. It is found in the cytoplasm. The protein localises to the secreted. It carries out the reaction Release of a C-terminal dipeptide, oligopeptide-|-Xaa-Yaa, when Xaa is not Pro, and Yaa is neither Asp nor Glu. Thus, conversion of angiotensin I to angiotensin II, with increase in vasoconstrictor activity, but no action on angiotensin II.. The catalysed reaction is angiotensin I + H2O = L-histidyl-L-leucine + angiotensin II. The enzyme catalyses bradykinin + H2O = L-Phe-L-Arg + bradykinin(1-7). It catalyses the reaction substance P + H2O = substance P(1-9) + L-Leu-L-Met-NH2. It carries out the reaction substance P + H2O = substance P(1-8) + Gly-L-Leu-L-Met-NH2. The catalysed reaction is substance P + H2O = L-Phe-L-Phe-Gly-L-Leu-L-Met-NH2 + substance P(1-6). The enzyme catalyses neurotensin + H2O = neurotensin(1-11) + L-isoleucyl-L-leucine. It catalyses the reaction goralatide + H2O = N-acetyl-L-seryl-L-aspartate + L-lysyl-L-proline. It carries out the reaction Met-enkephalin + H2O = L-phenylalanyl-L-methionine + L-tyrosylglycylglycine. The catalysed reaction is Leu-enkephalin + H2O = L-tyrosylglycylglycine + L-phenylalanyl-L-leucine. The enzyme catalyses Met-enkephalin-Arg-Phe + H2O = L-arginyl-L-phenylalanine + Met-enkephalin. With respect to regulation, the dipeptidyl carboxypeptidase activity is strongly activated by chloride. The dipeptidyl carboxypeptidase activity is specifically inhibited by lisinopril, captopril and enalaprilat. Strongly inhibited by lisinopril and captopril. Functionally, dipeptidyl carboxypeptidase that removes dipeptides from the C-terminus of a variety of circulating hormones, such as angiotensin I, bradykinin or enkephalins, thereby playing a key role in the regulation of blood pressure, electrolyte homeostasis or synaptic plasticity. Composed of two similar catalytic domains, each possessing a functional active site, with different selectivity for substrates. Plays a major role in the angiotensin-renin system that regulates blood pressure and sodium retention by the kidney by converting angiotensin I to angiotensin II, resulting in an increase of the vasoconstrictor activity of angiotensin. Also able to inactivate bradykinin, a potent vasodilator, and therefore enhance the blood pressure response. Acts as a regulator of synaptic transmission by mediating cleavage of neuropeptide hormones, such as substance P, neurotensin or enkephalins. Catalyzes degradation of different enkephalin neuropeptides (Met-enkephalin, Leu-enkephalin, Met-enkephalin-Arg-Phe and possibly Met-enkephalin-Arg-Gly-Leu). Acts as a regulator of synaptic plasticity in the nucleus accumbens of the brain by mediating cleavage of Met-enkephalin-Arg-Phe, a strong ligand of Mu-type opioid receptor OPRM1, into Met-enkephalin. Met-enkephalin-Arg-Phe cleavage by ACE decreases activation of OPRM1, leading to long-term synaptic potentiation of glutamate release. Also acts as a regulator of hematopoietic stem cell differentiation by mediating degradation of hemoregulatory peptide N-acetyl-SDKP (AcSDKP). Acts as a regulator of cannabinoid signaling pathway by mediating degradation of hemopressin, an antagonist peptide of the cannabinoid receptor CNR1. Involved in amyloid-beta metabolism by catalyzing degradation of Amyloid-beta protein 40 and Amyloid-beta protein 42 peptides, thereby preventing plaque formation. Catalyzes cleavage of cholecystokinin (maturation of Cholecystokinin-8 and Cholecystokinin-5) and Gonadoliberin-1 (both maturation and degradation) hormones. Degradation of hemoregulatory peptide N-acetyl-SDKP (AcSDKP) and amyloid-beta proteins is mediated by the N-terminal catalytic domain, while angiotensin I and cholecystokinin cleavage is mediated by the C-terminal catalytic region. In terms of biological role, soluble form that is released in blood plasma and other body fluids following proteolytic cleavage in the juxtamembrane stalk region. Its function is as follows. Isoform produced by alternative promoter usage that is specifically expressed in spermatocytes and adult testis, and which is required for male fertility. In contrast to somatic isoforms, only contains one catalytic domain. Acts as a dipeptidyl carboxypeptidase that removes dipeptides from the C-terminus of substrates. The identity of substrates that are needed for male fertility is unknown. May also have a glycosidase activity which releases GPI-anchored proteins from the membrane by cleaving the mannose linkage in the GPI moiety. The GPIase activity was reported to be essential for the egg-binding ability of the sperm. This activity is however unclear and has been challenged by other groups, suggesting that it may be indirect. This is Angiotensin-converting enzyme from Rattus norvegicus (Rat).